The following is a 183-amino-acid chain: MTKQPEDWLDDVPGDDIEDEDDEIIWVSKSEIKRDAEELKRLGAELVDLGRNALDKIPLDADLRDAIELAQRIKMEGRRRQLQLIGKMLRQRDVDPIRQALDKLKNRHNQQVVLFHKLEHLRDRLIVEGDDAVAEILNLWPNADRQQLRSLIRNAKKEKEGNKPPKSARQIFQYLRELAENEG.

Belongs to the DarP family.

Its subcellular location is the cytoplasm. Functionally, member of a network of 50S ribosomal subunit biogenesis factors which assembles along the 30S-50S interface, preventing incorrect 23S rRNA structures from forming. Promotes peptidyl transferase center (PTC) maturation. This Salmonella arizonae (strain ATCC BAA-731 / CDC346-86 / RSK2980) protein is Dual-action ribosomal maturation protein DarP.